The following is a 217-amino-acid chain: Adapter protein MecA (217 aa).

The protein belongs to the MecA family. As to quaternary structure, homodimer.

Its function is as follows. Enables the recognition and targeting of unfolded and aggregated proteins to the ClpC protease or to other proteins involved in proteolysis. This Listeria welshimeri serovar 6b (strain ATCC 35897 / DSM 20650 / CCUG 15529 / CIP 8149 / NCTC 11857 / SLCC 5334 / V8) protein is Adapter protein MecA.